The primary structure comprises 131 residues: Small ribosomal subunit protein uS8 (131 aa).

This sequence belongs to the universal ribosomal protein uS8 family. As to quaternary structure, part of the 30S ribosomal subunit. Contacts proteins S5 and S12.

In terms of biological role, one of the primary rRNA binding proteins, it binds directly to 16S rRNA central domain where it helps coordinate assembly of the platform of the 30S subunit. This Helicobacter acinonychis (strain Sheeba) protein is Small ribosomal subunit protein uS8.